The chain runs to 160 residues: MTVSFRPTADLVDDIGPDVRSCDLQFRQLGGRTEFAGPISTVRCFQDNALLKSVLSEPGGGGVLVVDGGGSLHTALVGDVIAELARANGWAGLIVNGAVRDSAALRGMDIGVKALGTNPRKSTKTGAGERDVDITLGGVTFTPGDIAYSDDDGIVVAVGD.

Substrate-binding positions include 78–81 and Arg-100; that span reads GDVI. Asp-101 contacts a divalent metal cation.

The protein belongs to the class II aldolase/RraA-like family. Homotrimer. It depends on a divalent metal cation as a cofactor.

It carries out the reaction 4-hydroxy-4-methyl-2-oxoglutarate = 2 pyruvate. The enzyme catalyses oxaloacetate + H(+) = pyruvate + CO2. Catalyzes the aldol cleavage of 4-hydroxy-4-methyl-2-oxoglutarate (HMG) into 2 molecules of pyruvate. Also contains a secondary oxaloacetate (OAA) decarboxylase activity due to the common pyruvate enolate transition state formed following C-C bond cleavage in the retro-aldol and decarboxylation reactions. The protein is Putative 4-hydroxy-4-methyl-2-oxoglutarate aldolase of Mycolicibacterium paratuberculosis (strain ATCC BAA-968 / K-10) (Mycobacterium paratuberculosis).